The following is a 76-amino-acid chain: Large ribosomal subunit protein bL31 (76 aa).

Belongs to the bacterial ribosomal protein bL31 family. Type A subfamily. In terms of assembly, part of the 50S ribosomal subunit.

Functionally, binds the 23S rRNA. The chain is Large ribosomal subunit protein bL31 from Gluconacetobacter diazotrophicus (strain ATCC 49037 / DSM 5601 / CCUG 37298 / CIP 103539 / LMG 7603 / PAl5).